A 603-amino-acid chain; its full sequence is 65-kDa microtubule-associated protein 7 (603 aa).

3 coiled-coil regions span residues 48–79 (KECLEIYRRKVDEAANSKAQLHQSLVSIEAEI), 131–186 (DIKA…EKSD), and 468–502 (RLVSILEDYKLTRKQQEEEKRRYRDQKKMQDLLIK). The disordered stretch occupies residues 501 to 559 (IKRRESIYGSKPSPRRSNSVRKTNGYNGDASVPPTPRRNSAGATNNDIMTTPRSYSSHR). Residue serine 513 is modified to Phosphoserine. 2 stretches are compositionally biased toward polar residues: residues 515 to 526 (RRSNSVRKTNGY) and 537 to 559 (RRNSAGATNNDIMTTPRSYSSHR). Position 599 is a phosphoserine (serine 599).

It belongs to the MAP65/ASE1 family. Forms dimer. Binds to microtubules (MT).

It is found in the nucleus. Its subcellular location is the cytoplasm. It localises to the cytoskeleton. The protein localises to the spindle pole. This is 65-kDa microtubule-associated protein 7 (MAP65-7) from Arabidopsis thaliana (Mouse-ear cress).